A 478-amino-acid chain; its full sequence is Protein nucleotidyltransferase YdiU (478 aa).

Residues Gly84, Gly86, Arg87, Lys107, Asp119, Gly120, Arg170, and Arg177 each contribute to the ATP site. The active-site Proton acceptor is the Asp246. The Mg(2+) site is built by Asn247 and Asp256. ATP is bound at residue Asp256.

The protein belongs to the SELO family. The cofactor is Mg(2+). Requires Mn(2+) as cofactor.

It carries out the reaction L-seryl-[protein] + ATP = 3-O-(5'-adenylyl)-L-seryl-[protein] + diphosphate. The catalysed reaction is L-threonyl-[protein] + ATP = 3-O-(5'-adenylyl)-L-threonyl-[protein] + diphosphate. It catalyses the reaction L-tyrosyl-[protein] + ATP = O-(5'-adenylyl)-L-tyrosyl-[protein] + diphosphate. The enzyme catalyses L-histidyl-[protein] + UTP = N(tele)-(5'-uridylyl)-L-histidyl-[protein] + diphosphate. It carries out the reaction L-seryl-[protein] + UTP = O-(5'-uridylyl)-L-seryl-[protein] + diphosphate. The catalysed reaction is L-tyrosyl-[protein] + UTP = O-(5'-uridylyl)-L-tyrosyl-[protein] + diphosphate. Nucleotidyltransferase involved in the post-translational modification of proteins. It can catalyze the addition of adenosine monophosphate (AMP) or uridine monophosphate (UMP) to a protein, resulting in modifications known as AMPylation and UMPylation. This is Protein nucleotidyltransferase YdiU from Escherichia coli O9:H4 (strain HS).